We begin with the raw amino-acid sequence, 147 residues long: UPF0306 protein YhbP (147 aa).

Belongs to the UPF0306 family.

The chain is UPF0306 protein YhbP from Shigella boydii serotype 4 (strain Sb227).